A 435-amino-acid chain; its full sequence is Centrosomal protein of 55 kDa (435 aa).

Disordered regions lie at residues 1–63 (MAAK…TDKA), 213–239 (HKEAKSDDQSAQKVQQELEAERNKVSR), and 268–287 (ERRREREDRKSSVERDALLQ). 2 coiled-coil regions span residues 18–140 (SSSS…KNKY) and 185–373 (EAYV…RESR). Basic and acidic residues-rich tracts occupy residues 26–49 (AELEVEKLKRENQQMKKSLEDMKR) and 213–222 (HKEAKSDDQS).

It localises to the cytoplasm. The protein resides in the cytoskeleton. It is found in the microtubule organizing center. Its subcellular location is the centrosome. The protein localises to the centriole. It localises to the cleavage furrow. The protein resides in the midbody. It is found in the midbody ring. Plays a role in mitotic exit and cytokinesis. Recruits PDCD6IP and TSG101 to midbody during cytokinesis. Required for successful completion of cytokinesis. Not required for microtubule nucleation. Plays a role in the development of the brain and kidney. The chain is Centrosomal protein of 55 kDa from Danio rerio (Zebrafish).